A 218-amino-acid polypeptide reads, in one-letter code: Adapter protein MecA (218 aa).

The protein belongs to the MecA family. As to quaternary structure, homodimer.

Functionally, enables the recognition and targeting of unfolded and aggregated proteins to the ClpC protease or to other proteins involved in proteolysis. This is Adapter protein MecA from Exiguobacterium sp. (strain ATCC BAA-1283 / AT1b).